The primary structure comprises 80 residues: Large ribosomal subunit protein bL31B (80 aa).

It belongs to the bacterial ribosomal protein bL31 family. Type B subfamily. As to quaternary structure, part of the 50S ribosomal subunit.

This is Large ribosomal subunit protein bL31B from Streptococcus mutans serotype c (strain ATCC 700610 / UA159).